The sequence spans 249 residues: 1-(5-phosphoribosyl)-5-[(5-phosphoribosylamino)methylideneamino] imidazole-4-carboxamide isomerase (249 aa).

The active-site Proton acceptor is Asp8. The active-site Proton donor is the Asp131.

Belongs to the HisA/HisF family.

It localises to the cytoplasm. The enzyme catalyses 1-(5-phospho-beta-D-ribosyl)-5-[(5-phospho-beta-D-ribosylamino)methylideneamino]imidazole-4-carboxamide = 5-[(5-phospho-1-deoxy-D-ribulos-1-ylimino)methylamino]-1-(5-phospho-beta-D-ribosyl)imidazole-4-carboxamide. The protein operates within amino-acid biosynthesis; L-histidine biosynthesis; L-histidine from 5-phospho-alpha-D-ribose 1-diphosphate: step 4/9. This is 1-(5-phosphoribosyl)-5-[(5-phosphoribosylamino)methylideneamino] imidazole-4-carboxamide isomerase from Nitrosomonas europaea (strain ATCC 19718 / CIP 103999 / KCTC 2705 / NBRC 14298).